The sequence spans 362 residues: Glutamate 5-kinase (362 aa).

Residue Lys-3 coordinates ATP. Substrate contacts are provided by Ser-43, Asp-128, and Asn-140. ATP is bound by residues 160–161 (TD) and 202–208 (TGGMRTK). Residues 267 to 348 (AGAILVDAGA…RDIENVLGYS (82 aa)) enclose the PUA domain.

The protein belongs to the glutamate 5-kinase family.

It localises to the cytoplasm. The catalysed reaction is L-glutamate + ATP = L-glutamyl 5-phosphate + ADP. It participates in amino-acid biosynthesis; L-proline biosynthesis; L-glutamate 5-semialdehyde from L-glutamate: step 1/2. Its function is as follows. Catalyzes the transfer of a phosphate group to glutamate to form L-glutamate 5-phosphate. This Xanthomonas oryzae pv. oryzae (strain MAFF 311018) protein is Glutamate 5-kinase.